Here is a 199-residue protein sequence, read N- to C-terminus: Golgi to ER traffic protein 1 (199 aa).

Over 1–11 (MLLPDLHPYTI) the chain is Lumenal. A helical membrane pass occupies residues 12–31 (LLSIFLVLVAKQLVATIGKS). At 32-115 (TIQEFVWLVY…SIDKASNALI (84 aa)) the chain is on the cytoplasmic side. Residues 76 to 116 (YAKWTKLNRQADKLSAELQKLNQEIQQQKSSIDKASNALIL) adopt a coiled-coil conformation. The helical transmembrane segment at 116-136 (LVLTTLPIWIARVFYRKTHLF) threads the bilayer. Over 137–160 (YIRQGIFPKYVEWVLALPFLPNGA) the chain is Lumenal. The helical transmembrane segment at 161–177 (VGLTIWMFAVNSVVSNF) threads the bilayer. The Cytoplasmic segment spans residues 178-199 (SFLVSFPFAKRVSKPVRDTKVE).

It belongs to the WRB/GET1 family. In terms of assembly, component of the Golgi to ER traffic (GET) complex, which is composed of GET1, GET2 and GET3. Within the complex, GET1 and GET2 form a heterotetramer which is stabilized by phosphatidylinositol binding and which binds to the GET3 homodimer.

The protein localises to the endoplasmic reticulum membrane. Its subcellular location is the golgi apparatus membrane. Functionally, required for the post-translational delivery of tail-anchored (TA) proteins to the endoplasmic reticulum. Together with GET2, acts as a membrane receptor for soluble GET3, which recognizes and selectively binds the transmembrane domain of TA proteins in the cytosol. The GET complex cooperates with the HDEL receptor ERD2 to mediate the ATP-dependent retrieval of resident ER proteins that contain a C-terminal H-D-E-L retention signal from the Golgi to the ER. This is Golgi to ER traffic protein 1 from Candida albicans (strain SC5314 / ATCC MYA-2876) (Yeast).